The sequence spans 515 residues: MPKERRSRRRPQPIIRWVSLTLTLLALCQPIQTWRCSLSLGNQQWMTTYNQEAKFFISIDQILEAHNQSPFCPRSPRYTLDFVNGYPKIYWPPPQGRRRFGARAMVTYDCEPRCPYVGADHFDCPHWDNASQADQGSFYVNHQTLFLHLKQCHGIFTLTWEIWGYDPLITFSLHKIPDPPQPDFPQLNSDWVPSVRSWALLLNQTARAFPDCAICWEPSPPWAPEILVYNKTISSSGPGLALPDAQIFWVNTSLFNTTQGWHHPSQRLLFNVSQGNALLLPPISLVNLSTASSAPPTRVRRSPVAALTLGLALSVGLTGINVAVSALSHQRLTSLIHVLEQDQQRLITAINQTHYNLLNVASVVAQNRRGLDWLYIRLGFQSLCPTINEPCCFLRIQNDSIIRLGDLQPLSQRVSTDWQWPWNWDLGLTAWVRETIHSVLSLFLLALFLLFLAPCLIKCLTSRLLKLLRQAPHFPEISFPPKPDSDYQALLPSAPEIYSHLSPTKPDYINLRPCP.

Residues Met-1 to Thr-33 form the signal peptide. Topologically, residues Trp-34–Thr-435 are extracellular. 2 N-linked (GlcNAc...) asparagine; by host glycosylation sites follow: Asn-129 and Asn-203. The CXXC signature appears at Cys-212 to Cys-215. 3 disulfide bridges follow: Cys-212-Cys-215, Cys-212-Cys-392, and Cys-384-Cys-391. N-linked (GlcNAc...) asparagine; by host glycosylation is found at Asn-230, Asn-251, Asn-256, Asn-271, and Asn-287. The fusion peptide stretch occupies residues Val-304–Val-324. Coiled-coil stretches lie at residues Gln-330–Ile-376 and Asn-388–Trp-420. The N-linked (GlcNAc...) asparagine; by host glycan is linked to Asn-351. The segment at Ala-365–Gln-381 is immunosuppression. A CX6CC motif is present at residues Cys-384 to Cys-392. N-linked (GlcNAc...) asparagine; by host glycosylation occurs at Asn-398. Residues Ile-436 to Leu-456 traverse the membrane as a helical segment. Cys-455 carries the S-palmitoyl cysteine; by host lipid modification. Residues Ile-457 to Pro-515 are Cytoplasmic-facing.

In terms of assembly, the mature envelope protein (Env) consists of a trimer of SU-TM heterodimers attached by a labile interchain disulfide bond. In terms of processing, specific enzymatic cleavages in vivo yield mature proteins. Envelope glycoproteins are synthesized as an inactive precursor that is N-glycosylated and processed likely by host cell furin or by a furin-like protease in the Golgi to yield the mature SU and TM proteins. The cleavage site between SU and TM requires the minimal sequence [KR]-X-[KR]-R. Post-translationally, the CXXC motif is highly conserved across a broad range of retroviral envelope proteins. It is thought to participate in the formation of a labile disulfide bond possibly with the CX6CC motif present in the transmembrane protein. Isomerization of the intersubunit disulfide bond to an SU intrachain disulfide bond is thought to occur upon receptor recognition in order to allow membrane fusion. The transmembrane protein is palmitoylated.

The protein localises to the virion membrane. Its subcellular location is the host cell membrane. The surface protein (SU) attaches the virus to the host cell by binding to its receptor. This interaction triggers the refolding of the transmembrane protein (TM) and is thought to activate its fusogenic potential by unmasking its fusion peptide. Fusion occurs at the host cell plasma membrane. In terms of biological role, the transmembrane protein (TM) acts as a class I viral fusion protein. Under the current model, the protein has at least 3 conformational states: pre-fusion native state, pre-hairpin intermediate state, and post-fusion hairpin state. During viral and target cell membrane fusion, the coiled coil regions (heptad repeats) assume a trimer-of-hairpins structure, positioning the fusion peptide in close proximity to the C-terminal region of the ectodomain. The formation of this structure appears to drive apposition and subsequent fusion of viral and target cell membranes. Membranes fusion leads to delivery of the nucleocapsid into the cytoplasm. This Bovine leukemia virus (isolate Belgium LB59) (BLV) protein is Envelope glycoprotein (env).